We begin with the raw amino-acid sequence, 171 residues long: MNIRQQLVQLLNLAMVLSTAFMFWKGLGLVTNSNSPIVVVLSGSMEPAFQRGDILFLWNRDKYVDIGDVVVYEVKGKPIPIVHRVLREHKVTNKDRKVRQLLLTKGDNNPTDDLSLYAHKSNYLDRDEDVLGTVKAYLPKVGYVTILITENKYAKLGLLGLMALSTLLTRE.

Residues 1–6 (MNIRQQ) lie on the Cytoplasmic side of the membrane. The helical; Signal-anchor for type II membrane protein transmembrane segment at 7–24 (LVQLLNLAMVLSTAFMFW) threads the bilayer. The Lumenal portion of the chain corresponds to 25 to 171 (KGLGLVTNSN…MALSTLLTRE (147 aa)). Residues S44, H83, and D113 each act as charge relay system in the active site. A C-terminal short (CTS) helix region spans residues 157–168 (GLLGLMALSTLL).

It belongs to the peptidase S26B family. In terms of assembly, component of the signal peptidase complex (SPC) composed of a catalytic subunit SEC11 and three accessory subunits SPC1, SPC2 and SPC3. The complex induces a local thinning of the ER membrane which is used to measure the length of the signal peptide (SP) h-region of protein substrates. This ensures the selectivity of the complex towards h-regions shorter than 18-20 amino acids. SPC associates with the translocon complex.

The protein resides in the endoplasmic reticulum membrane. The catalysed reaction is Cleavage of hydrophobic, N-terminal signal or leader sequences from secreted and periplasmic proteins.. Its function is as follows. Catalytic component of the signal peptidase complex (SPC) which catalyzes the cleavage of N-terminal signal sequences from nascent proteins as they are translocated into the lumen of the endoplasmic reticulum. Specifically cleaves N-terminal signal peptides that contain a hydrophobic alpha-helix (h-region) shorter than 18-20 amino acids. This Komagataella phaffii (strain GS115 / ATCC 20864) (Yeast) protein is Signal peptidase complex catalytic subunit SEC11 (SEC11).